The sequence spans 221 residues: Chalcone--flavanone isomerase (221 aa).

Residues threonine 50, asparagine 115, and threonine 192 each contribute to the substrate site.

It belongs to the chalcone isomerase family.

It catalyses the reaction a chalcone = a flavanone.. It participates in secondary metabolite biosynthesis; flavonoid biosynthesis. Functionally, catalyzes the intramolecular cyclization of bicyclic chalcones into tricyclic (S)-flavanones. Responsible for the isomerization of 4,2',4',6'-tetrahydroxychalcone (also termed chalcone) into naringenin. In Phaseolus vulgaris (Kidney bean), this protein is Chalcone--flavanone isomerase (CHI).